Reading from the N-terminus, the 587-residue chain is Hatching enzyme (587 aa).

An N-terminal signal peptide occupies residues 1-18 (MANSGLILLVMFMIHVTT). The propeptide at 19–166 (VHNVPLPSTA…PRCGVPDVLP (148 aa)) is activation peptide. N-linked (GlcNAc...) asparagine glycans are attached at residues Asn64, Asn126, and Asn141. The short motif at 157–164 (PRCGVPDV) is the Cysteine switch element. Cys159 and His283 together coordinate Zn(2+). Residue Glu284 is part of the active site. Positions 287 and 293 each coordinate Zn(2+). The interval 325 to 382 (LYGSNSGSGTTTTTRRPTTTRATTTRRTTTTRATTTRATTTTTTSPSRPSPPRRACSG) is disordered. The segment covering 334–371 (TTTTTRRPTTTRATTTRRTTTTRATTTRATTTTTTSPS) has biased composition (low complexity). Cysteines 380 and 582 form a disulfide. Hemopexin repeat units lie at residues 381 to 422 (SGSF…RFGF), 425 to 468 (PQNI…WVGL), 469 to 513 (PCNI…FNDV), and 518 to 570 (HDGV…IPQC). The N-linked (GlcNAc...) asparagine glycan is linked to Asn584.

It belongs to the peptidase M10A family. Zn(2+) serves as cofactor.

The enzyme catalyses Hydrolysis of proteins of the fertilization envelope and dimethylcasein.. In terms of biological role, allows the sea urchin to digest the protective envelope derived from the egg extracellular matrix; thus allowing the sea urchin to swim freely. This is Hatching enzyme from Paracentrotus lividus (Common sea urchin).